Reading from the N-terminus, the 40-residue chain is Conotoxin Bt14.16 (40 aa).

Residues 1-18 (SDGRDAAVIYTESDVIAR) constitute a propeptide that is removed on maturation. 2 disulfide bridges follow: Cys-21/Cys-36 and Cys-24/Cys-29.

It belongs to the conotoxin A superfamily. In terms of tissue distribution, expressed by the venom duct.

The protein resides in the secreted. Functionally, probable neurotoxin with unknown target. Possibly targets ion channels. The protein is Conotoxin Bt14.16 of Conus betulinus (Beech cone).